The chain runs to 621 residues: 1-deoxy-D-xylulose-5-phosphate synthase (621 aa).

Thiamine diphosphate-binding positions include His-80 and Gly-121–Ser-123. Residue Asp-152 participates in Mg(2+) binding. Residues Gly-153–Ala-154, Asn-181, Tyr-288, and Glu-370 contribute to the thiamine diphosphate site. Residue Asn-181 coordinates Mg(2+).

This sequence belongs to the transketolase family. DXPS subfamily. Homodimer. Mg(2+) serves as cofactor. Requires thiamine diphosphate as cofactor.

It carries out the reaction D-glyceraldehyde 3-phosphate + pyruvate + H(+) = 1-deoxy-D-xylulose 5-phosphate + CO2. The protein operates within metabolic intermediate biosynthesis; 1-deoxy-D-xylulose 5-phosphate biosynthesis; 1-deoxy-D-xylulose 5-phosphate from D-glyceraldehyde 3-phosphate and pyruvate: step 1/1. Functionally, catalyzes the acyloin condensation reaction between C atoms 2 and 3 of pyruvate and glyceraldehyde 3-phosphate to yield 1-deoxy-D-xylulose-5-phosphate (DXP). The protein is 1-deoxy-D-xylulose-5-phosphate synthase of Serratia proteamaculans (strain 568).